The primary structure comprises 591 residues: Aspartate--tRNA(Asp/Asn) ligase (591 aa).

Glu175 contributes to the L-aspartate binding site. Residues 199–202 (QQFK) are aspartate. 2 residues coordinate L-aspartate: Arg221 and His453. 221-223 (RDE) is an ATP binding site. Residue Glu486 participates in ATP binding. Arg493 is a binding site for L-aspartate. Position 538–541 (538–541 (GIDR)) interacts with ATP.

It belongs to the class-II aminoacyl-tRNA synthetase family. Type 1 subfamily. In terms of assembly, homodimer.

The protein resides in the cytoplasm. It carries out the reaction tRNA(Asx) + L-aspartate + ATP = L-aspartyl-tRNA(Asx) + AMP + diphosphate. In terms of biological role, aspartyl-tRNA synthetase with relaxed tRNA specificity since it is able to aspartylate not only its cognate tRNA(Asp) but also tRNA(Asn). Reaction proceeds in two steps: L-aspartate is first activated by ATP to form Asp-AMP and then transferred to the acceptor end of tRNA(Asp/Asn). The protein is Aspartate--tRNA(Asp/Asn) ligase of Cereibacter sphaeroides (strain KD131 / KCTC 12085) (Rhodobacter sphaeroides).